Consider the following 229-residue polypeptide: 7-cyano-7-deazaguanine synthase (229 aa).

8-18 (FSGGQDSTTCL) contributes to the ATP binding site. C186, C195, C198, and C201 together coordinate Zn(2+).

The protein belongs to the QueC family. Zn(2+) serves as cofactor.

The catalysed reaction is 7-carboxy-7-deazaguanine + NH4(+) + ATP = 7-cyano-7-deazaguanine + ADP + phosphate + H2O + H(+). It participates in purine metabolism; 7-cyano-7-deazaguanine biosynthesis. In terms of biological role, catalyzes the ATP-dependent conversion of 7-carboxy-7-deazaguanine (CDG) to 7-cyano-7-deazaguanine (preQ(0)). This is 7-cyano-7-deazaguanine synthase from Edwardsiella ictaluri (strain 93-146).